A 382-amino-acid chain; its full sequence is D-galactonate dehydratase (382 aa).

Asp183 provides a ligand contact to Mg(2+). Residue His185 is the Proton donor of the active site. Mg(2+) contacts are provided by Glu209 and Glu235. Catalysis depends on His285, which acts as the Proton acceptor.

This sequence belongs to the mandelate racemase/muconate lactonizing enzyme family. GalD subfamily. Mg(2+) serves as cofactor.

It carries out the reaction D-galactonate = 2-dehydro-3-deoxy-D-galactonate + H2O. Its pathway is carbohydrate acid metabolism; D-galactonate degradation; D-glyceraldehyde 3-phosphate and pyruvate from D-galactonate: step 1/3. Functionally, catalyzes the dehydration of D-galactonate to 2-keto-3-deoxy-D-galactonate. The polypeptide is D-galactonate dehydratase (Escherichia coli O45:K1 (strain S88 / ExPEC)).